We begin with the raw amino-acid sequence, 161 residues long: ATP synthase subunit b 1 (161 aa).

Residues 5-25 (EFWVAVAFVIFCGIVWKAGGF) traverse the membrane as a helical segment.

This sequence belongs to the ATPase B chain family. F-type ATPases have 2 components, F(1) - the catalytic core - and F(0) - the membrane proton channel. F(1) has five subunits: alpha(3), beta(3), gamma(1), delta(1), epsilon(1). F(0) has three main subunits: a(1), b(2) and c(10-14). The alpha and beta chains form an alternating ring which encloses part of the gamma chain. F(1) is attached to F(0) by a central stalk formed by the gamma and epsilon chains, while a peripheral stalk is formed by the delta and b chains.

The protein localises to the cell inner membrane. Its function is as follows. F(1)F(0) ATP synthase produces ATP from ADP in the presence of a proton or sodium gradient. F-type ATPases consist of two structural domains, F(1) containing the extramembraneous catalytic core and F(0) containing the membrane proton channel, linked together by a central stalk and a peripheral stalk. During catalysis, ATP synthesis in the catalytic domain of F(1) is coupled via a rotary mechanism of the central stalk subunits to proton translocation. In terms of biological role, component of the F(0) channel, it forms part of the peripheral stalk, linking F(1) to F(0). This chain is ATP synthase subunit b 1, found in Methylobacterium sp. (strain 4-46).